The chain runs to 329 residues: G-protein coupled bile acid receptor 1 (329 aa).

Residues 1-19 lie on the Extracellular side of the membrane; sequence MTSNSTREVPSPVPAGALG. N4 is a glycosylation site (N-linked (GlcNAc...) asparagine). A helical transmembrane segment spans residues 20–40; sequence LSLALASLIVAANLLLAVGIA. At 41–52 the chain is on the cytoplasmic side; sequence GDRRLRSPPAGC. The chain crosses the membrane as a helical span at residues 53 to 73; that stretch reads FFLSLLLAGLLTGLALPALPV. At 74 to 85 the chain is on the extracellular side; that stretch reads LWSQSRRGYWSC. Residues C85 and C155 are joined by a disulfide bond. The chain crosses the membrane as a helical span at residues 86-106; the sequence is LFLYLAPNFCFLSLLANLLLV. At 107-125 the chain is on the cytoplasmic side; the sequence is HGERYMAVLRPLRPRGSMR. Residues 126-146 form a helical membrane-spanning segment; sequence LALLLTWAAPLLFASLPALGW. At 147–165 the chain is on the extracellular side; the sequence is NHWAPGGNCSSQAVFPAPY. N154 is a glycosylation site (N-linked (GlcNAc...) asparagine). The chain crosses the membrane as a helical span at residues 166–186; the sequence is LYLEIYGLLLPAVGAAALLSV. The Cytoplasmic portion of the chain corresponds to 187–230; the sequence is RVLVTAHRQLQDIRRLERAVCRGAPSALARALTWRQARAQAGAT. Residues 231–251 form a helical membrane-spanning segment; the sequence is LLFGLCWGPYVATLLLSVLAF. Over 252–261 the chain is Extracellular; that stretch reads EQRPPLGPGT. A helical membrane pass occupies residues 262 to 282; sequence LLSLISLGSASAAAVPVAMGL. The Cytoplasmic segment spans residues 283 to 329; sequence GDQRYTGPWRVAAQKWLRMLRGRPQSSPGPSTAYHTSSQSSVDLDLN. Residues 304 to 329 form a disordered region; it reads GRPQSSPGPSTAYHTSSQSSVDLDLN. A compositionally biased stretch (polar residues) spans 306-329; sequence PQSSPGPSTAYHTSSQSSVDLDLN.

The protein belongs to the G-protein coupled receptor 1 family.

The protein localises to the cell membrane. Functionally, receptor for bile acid. Bile acid-binding induces its internalization, activation of extracellular signal-regulated kinase and intracellular cAMP production. May be involved in the suppression of macrophage functions by bile acids. Involved in bile acid promoted GLP1R secretion. In Bos taurus (Bovine), this protein is G-protein coupled bile acid receptor 1 (GPBAR1).